A 192-amino-acid chain; its full sequence is UPF0301 protein Bphyt_0868 (192 aa).

It belongs to the UPF0301 (AlgH) family.

The polypeptide is UPF0301 protein Bphyt_0868 (Paraburkholderia phytofirmans (strain DSM 17436 / LMG 22146 / PsJN) (Burkholderia phytofirmans)).